A 963-amino-acid chain; its full sequence is Ubiquitin carboxyl-terminal hydrolase 11 (963 aa).

The segment at 64–93 (VTEDREPQHEELPGLDSQWRQIENGESGRE) is disordered. The segment covering 65-75 (TEDREPQHEEL) has biased composition (basic and acidic residues). One can recognise a DUSP domain in the interval 76–184 (PGLDSQWRQI…GQPPIERKVI (109 aa)). N6-acetyllysine is present on K245. The 622-residue stretch at 309–930 (CGLTNLGNTC…AAYVLFYQRQ (622 aa)) folds into the USP domain. The active-site Nucleophile is the C318. Disordered stretches follow at residues 644–691 (TKPN…SGVT) and 716–735 (LFTL…TSPE). S648 carries the phosphoserine modification. Residues 649 to 665 (DDEDDGDEKEDDEEDKD) show a composition bias toward acidic residues. Polar residues predominate over residues 717 to 731 (FTLQTVNSNGTSDRT). Position 733 is a phosphoserine (S733). Catalysis depends on H888, which acts as the Proton acceptor. Over residues 938–957 (SPAGSSGAPASPACSSPPSS) the composition is skewed to low complexity. The segment at 938–963 (SPAGSSGAPASPACSSPPSSEFMDVN) is disordered. S948 bears the Phosphoserine mark.

Belongs to the peptidase C19 family. Monomer. Associated component of the Polycomb group (PcG) multiprotein PRC1-like complex. Interacts with RANBP9/RANBPM. Interacts with BRCA2. Interacts with CHUK/IKKA. Interacts with NFKBIA. Interacts with SPRY3, RAE1, MYCBP2/PAM, and KCTD6. In terms of assembly, (Microbial infection) Interacts with papilloma virus protein 16E7.

It localises to the nucleus. It is found in the cytoplasm. The protein localises to the chromosome. The catalysed reaction is Thiol-dependent hydrolysis of ester, thioester, amide, peptide and isopeptide bonds formed by the C-terminal Gly of ubiquitin (a 76-residue protein attached to proteins as an intracellular targeting signal).. Functionally, protease that can remove conjugated ubiquitin from target proteins and polyubiquitin chains. Inhibits the degradation of target proteins by the proteasome. Cleaves preferentially 'Lys-6' and 'Lys-63'-linked ubiquitin chains. Has lower activity with 'Lys-11' and 'Lys-33'-linked ubiquitin chains, and extremely low activity with 'Lys-27', 'Lys-29' and 'Lys-48'-linked ubiquitin chains (in vitro). Plays a role in the regulation of pathways leading to NF-kappa-B activation. Plays a role in the regulation of DNA repair after double-stranded DNA breaks. Acts as a chromatin regulator via its association with the Polycomb group (PcG) multiprotein PRC1-like complex; may act by deubiquitinating components of the PRC1-like complex. Promotes cell proliferation by deubiquitinating phosphorylated E2F1. This is Ubiquitin carboxyl-terminal hydrolase 11 (USP11) from Homo sapiens (Human).